The following is a 427-amino-acid chain: Peptidase B (427 aa).

Mn(2+) contacts are provided by lysine 195 and aspartate 200. Lysine 207 is an active-site residue. Mn(2+)-binding residues include aspartate 218, aspartate 277, and glutamate 279. Arginine 281 is an active-site residue.

The protein belongs to the peptidase M17 family. Homohexamer. The cofactor is Mn(2+).

It localises to the cytoplasm. It catalyses the reaction Release of an N-terminal amino acid, Xaa, from a peptide or arylamide. Xaa is preferably Glu or Asp but may be other amino acids, including Leu, Met, His, Cys and Gln.. Functionally, probably plays an important role in intracellular peptide degradation. This is Peptidase B from Escherichia coli O139:H28 (strain E24377A / ETEC).